Here is a 423-residue protein sequence, read N- to C-terminus: ATP-dependent Clp protease ATP-binding subunit ClpX (423 aa).

In terms of domain architecture, ClpX-type ZB spans 1–50; the sequence is MTDDTEYRCSFCGKEHHQVDDLIAGPDVRICSECVVLSCEIVEDRRNEAL. 4 residues coordinate Zn(2+): C9, C12, C31, and C34. 126–133 lines the ATP pocket; that stretch reads PTGCGKTY.

This sequence belongs to the ClpX chaperone family. Component of the ClpX-ClpP complex. Forms a hexameric ring that, in the presence of ATP, binds to fourteen ClpP subunits assembled into a disk-like structure with a central cavity, resembling the structure of eukaryotic proteasomes.

ATP-dependent specificity component of the Clp protease. It directs the protease to specific substrates. Can perform chaperone functions in the absence of ClpP. In Tropheryma whipplei (strain TW08/27) (Whipple's bacillus), this protein is ATP-dependent Clp protease ATP-binding subunit ClpX.